We begin with the raw amino-acid sequence, 536 residues long: MELTLWTYEGPPHVGAMRIASSMEGVHYVLHAPQGDTYADLLFTMIERRGRRPPVTYTTFQARDLGGDTAELVKGHLHEAVERFNPEALLVGESCTAELIQDQPGSLASGMGFNMPVVGIELPAYSKKENWGASETFYQLVRGILSKQPSEQSGVSHSPAAWKSQGRRPRVNLLGPTLLGFRCRDDILELEKLLNQHGIDVHVVAPLEARPADLMRLPNADLNVCLYPEIAEATCLWLERNYGMPFSKTVPIGVGATKDFLEELHQLLEMPAPNPGEGAEQSRLPWYSQSVDSNYLTGKRVFIFGDGTHALAAARIADQELGFKVVGLGTYSREMARPVRAAAKELGLEALISDDYLAVEAAMAEAAPELVLGTQMERHSAKRLGIPCAVISTPMHVQDVPARYSPQMGWEGANVIFDSWVHPLMMGLEEHLIGMFRHDFEFVDGHQSHLGHLGGHQSQTEQQQSQAATNPSTQSNADSSSEESPLWTPEGEAELAKIPFFVRGKVRRNTEKYARQAGCRCIDSETVYDAKVHFRA.

Asp-36 contributes to the [4Fe-4S] cluster binding site. Asp-292 acts as the Proton donor in catalysis. Gly-427–Leu-428 contacts substrate. Over residues Ser-448–Thr-469 the composition is skewed to low complexity. The segment at Ser-448 to Pro-489 is disordered. A compositionally biased stretch (polar residues) spans Asn-470 to Glu-483.

This sequence belongs to the ChlB/BchB/BchZ family. Protochlorophyllide reductase is composed of three subunits; ChlL, ChlN and ChlB. Forms a heterotetramer of two ChlB and two ChlN subunits. The cofactor is [4Fe-4S] cluster.

The enzyme catalyses chlorophyllide a + oxidized 2[4Fe-4S]-[ferredoxin] + 2 ADP + 2 phosphate = protochlorophyllide a + reduced 2[4Fe-4S]-[ferredoxin] + 2 ATP + 2 H2O. Its pathway is porphyrin-containing compound metabolism; chlorophyll biosynthesis (light-independent). Its function is as follows. Component of the dark-operative protochlorophyllide reductase (DPOR) that uses Mg-ATP and reduced ferredoxin to reduce ring D of protochlorophyllide (Pchlide) to form chlorophyllide a (Chlide). This reaction is light-independent. The NB-protein (ChlN-ChlB) is the catalytic component of the complex. This Prochlorococcus marinus (strain MIT 9313) protein is Light-independent protochlorophyllide reductase subunit B.